We begin with the raw amino-acid sequence, 932 residues long: Isoleucine--tRNA ligase (932 aa).

A 'HIGH' region motif is present at residues 57–67 (PYANGDIHMGH). Position 556 (Glu556) interacts with L-isoleucyl-5'-AMP. The 'KMSKS' region motif lies at 597–601 (KMSKS). An ATP-binding site is contributed by Lys600. Zn(2+)-binding residues include Cys891, Cys894, Cys911, and Cys914.

This sequence belongs to the class-I aminoacyl-tRNA synthetase family. IleS type 1 subfamily. In terms of assembly, monomer. Requires Zn(2+) as cofactor.

Its subcellular location is the cytoplasm. The catalysed reaction is tRNA(Ile) + L-isoleucine + ATP = L-isoleucyl-tRNA(Ile) + AMP + diphosphate. Catalyzes the attachment of isoleucine to tRNA(Ile). As IleRS can inadvertently accommodate and process structurally similar amino acids such as valine, to avoid such errors it has two additional distinct tRNA(Ile)-dependent editing activities. One activity is designated as 'pretransfer' editing and involves the hydrolysis of activated Val-AMP. The other activity is designated 'posttransfer' editing and involves deacylation of mischarged Val-tRNA(Ile). This chain is Isoleucine--tRNA ligase, found in Lactiplantibacillus plantarum (strain ATCC BAA-793 / NCIMB 8826 / WCFS1) (Lactobacillus plantarum).